A 377-amino-acid chain; its full sequence is MMIASSLAVLYGIAIVSSMGVQSARADYADDCTTPDGDQGQCMPFSSCRTIEERLTEAQKAGQKVPADYASYLQKALCGEFNGVRHFCCPSANIQHNSKVMSLFKDENFDCGNFLSQRVSNGYEVKLSSRPWMALLRYQQFGESRFLCGGAMISERYILTAAHCVHGLQNDLYEIRLGEHRISTEEDCRQQGRKKKCAPPVVNVGIEKHLIHEKYDARHIMHDIALLKLNRSVPFQKHIKPICLPITDELKEKAEQISTYFVTGWGTTENGSSSDVLLQANVPLQPRSACSQAYRRAVPLSQLCVGGGDLQDSCKGDSGGPLQAPAQYLGEYAPKMVEFGIVSQGVVTCGQISLPGLYTNVGEYVQWITDTMASNGL.

Positions 1–26 (MMIASSLAVLYGIAIVSSMGVQSARA) are cleaved as a signal peptide. In terms of domain architecture, Clip spans 31-89 (DCTTPDGDQGQCMPFSSCRTIEERLTEAQKAGQKVPADYASYLQKALCGEFNGVRHFCC). 6 disulfide bridges follow: Cys32-Cys88, Cys42-Cys78, Cys48-Cys89, Cys111-Cys243, Cys148-Cys164, and Cys188-Cys197. The interval 91–118 (SANIQHNSKVMSLFKDENFDCGNFLSQR) is linker. One can recognise a Peptidase S1 domain in the interval 119 to 373 (VSNGYEVKLS…YVQWITDTMA (255 aa)). His163 acts as the Charge relay system in catalysis. Ca(2+)-binding residues include Glu179, Arg181, Thr184, and Asp187. Residue Asp223 is the Charge relay system of the active site. N-linked (GlcNAc...) asparagine glycans are attached at residues Asn230 and Asn270. Intrachain disulfides connect Cys290/Cys304 and Cys314/Cys349. Ser318 serves as the catalytic Charge relay system.

It belongs to the peptidase S1 family. CLIP subfamily. Post-translationally, proteolytically cleaved by a tryspin-like protease which is likely to activate grass.

The protein resides in the secreted. Its function is as follows. Endopeptidase. Plays a key role in innate immunity by activating the Toll pathway in response to fungal and Gram-positive bacterial infections, presumably downstream of pattern-recognition receptors (PRR), such as PGRP-SA, GNBP1 and GNBP3, and upstream of spz processing enzyme SPE. The polypeptide is Serine protease grass (Drosophila melanogaster (Fruit fly)).